The primary structure comprises 247 residues: Probable transcriptional regulatory protein DVU_2259 (247 aa).

A disordered region spans residues 1–22; sequence MAGHSKWANIQHRKGRQDAKRG.

Belongs to the TACO1 family.

Its subcellular location is the cytoplasm. In Nitratidesulfovibrio vulgaris (strain ATCC 29579 / DSM 644 / CCUG 34227 / NCIMB 8303 / VKM B-1760 / Hildenborough) (Desulfovibrio vulgaris), this protein is Probable transcriptional regulatory protein DVU_2259.